We begin with the raw amino-acid sequence, 510 residues long: Myosin-binding protein C, cardiac-type (510 aa).

3 consecutive Ig-like C2-type domains span residues 177–269 (KKST…VKEP), 270–347 (PYSS…TVKT), and 378–438 (RDQA…SFIP).

The protein belongs to the immunoglobulin superfamily. MyBP family. Heart.

Its function is as follows. Thick filament-associated protein located in the crossbridge region of vertebrate striated muscle a bands. In vitro it binds MHC, F-actin and native thin filaments, and modifies the activity of actin-activated myosin ATPase. It may modulate muscle contraction or may play a more structural role. The protein is Myosin-binding protein C, cardiac-type of Ambystoma mexicanum (Axolotl).